The chain runs to 406 residues: Succinylornithine transaminase (406 aa).

Residue K252 is modified to N6-(pyridoxal phosphate)lysine.

It belongs to the class-III pyridoxal-phosphate-dependent aminotransferase family. AstC subfamily. Requires pyridoxal 5'-phosphate as cofactor.

It catalyses the reaction N(2)-succinyl-L-ornithine + 2-oxoglutarate = N-succinyl-L-glutamate 5-semialdehyde + L-glutamate. The protein operates within amino-acid degradation; L-arginine degradation via AST pathway; L-glutamate and succinate from L-arginine: step 3/5. Its function is as follows. Catalyzes the transamination of N(2)-succinylornithine and alpha-ketoglutarate into N(2)-succinylglutamate semialdehyde and glutamate. Can also act as an acetylornithine aminotransferase. The chain is Succinylornithine transaminase from Escherichia coli O127:H6 (strain E2348/69 / EPEC).